The primary structure comprises 137 residues: KPAEKKPAEKTPVAEKAPAEKKPKAGKKLPKDAAAGDKKKKRSKKAVETYKIYIFKVLKQVHPDIGISSKAMGIMNSFINDIFEKLAQEASRLARYNKKPTITSREIQTAVRLVLPGELAKHAVSEGTKAVTKFTSS.

Basic and acidic residues predominate over residues 1–37 (KPAEKKPAEKTPVAEKAPAEKKPKAGKKLPKDAAAGD). The interval 1–45 (KPAEKKPAEKTPVAEKAPAEKKPKAGKKLPKDAAAGDKKKKRSKK) is disordered. An N6-acetyllysine mark is found at K27 and K28. K133 participates in a covalent cross-link: Glycyl lysine isopeptide (Lys-Gly) (interchain with G-Cter in ubiquitin).

It belongs to the histone H2B family. As to quaternary structure, the nucleosome is a histone octamer containing two molecules each of H2A, H2B, H3 and H4 assembled in one H3-H4 heterotetramer and two H2A-H2B heterodimers. The octamer wraps approximately 147 bp of DNA. Post-translationally, can be acetylated to formH2BK33ac and H2BK34ac. In terms of processing, monoubiquitinated to form H2BK143ub1; may give a specific tag for epigenetic transcriptional activation. As to expression, ubiquitous. Highest level in shoots, fruits and young flower buds, including petals, anthers and ovules.

Its subcellular location is the nucleus. It localises to the chromosome. Its function is as follows. Core component of nucleosome. Nucleosomes wrap and compact DNA into chromatin, limiting DNA accessibility to the cellular machineries which require DNA as a template. Histones thereby play a central role in transcription regulation, DNA repair, DNA replication and chromosomal stability. DNA accessibility is regulated via a complex set of post-translational modifications of histones, also called histone code, and nucleosome remodeling. The protein is Histone H2B.3 (H2B-3) of Solanum lycopersicum (Tomato).